Consider the following 402-residue polypeptide: Olfactomedin-like protein 1 (402 aa).

Positions 1 to 28 are cleaved as a signal peptide; sequence MMVALRGASALLVLFLAAFLPPPQCTQD. An N-linked (GlcNAc...) asparagine glycan is attached at Asn66. Residues 79–133 adopt a coiled-coil conformation; sequence SEYKSAVGNLALRVERAQREIDYIQYLREADECIESEDKTLAEMLLQEAEEEKKI. Asn138 and Asn183 each carry an N-linked (GlcNAc...) asparagine glycan. Residues 140–397 form the Olfactomedin-like domain; it reads SCDNMLMGIK…QIIYKLQTKR (258 aa). A disulfide bridge connects residues Cys141 and Cys324.

Post-translationally, highly N-glycosylated. As to expression, mainly expressed in the small intestine, liver, lung and heart.

The protein localises to the secreted. The protein is Olfactomedin-like protein 1 (OLFML1) of Homo sapiens (Human).